The primary structure comprises 280 residues: 2-dehydro-3-deoxyphosphooctonate aldolase (280 aa).

Belongs to the KdsA family.

Its subcellular location is the cytoplasm. The enzyme catalyses D-arabinose 5-phosphate + phosphoenolpyruvate + H2O = 3-deoxy-alpha-D-manno-2-octulosonate-8-phosphate + phosphate. Its pathway is carbohydrate biosynthesis; 3-deoxy-D-manno-octulosonate biosynthesis; 3-deoxy-D-manno-octulosonate from D-ribulose 5-phosphate: step 2/3. It participates in bacterial outer membrane biogenesis; lipopolysaccharide biosynthesis. This is 2-dehydro-3-deoxyphosphooctonate aldolase from Coxiella burnetii (strain CbuK_Q154) (Coxiella burnetii (strain Q154)).